The sequence spans 472 residues: Carboxypeptidase Q (472 aa).

A signal peptide spans 1–20 (MRFLFFLFVAVVHLFSLGSG). A propeptide spanning residues 21–44 (KAIYKSGVSQRTFQEIKEEIANYE) is cleaved from the precursor. Residue Asn61 is glycosylated (N-linked (GlcNAc...) asparagine). Zn(2+)-binding residues include His290 and Asp302. The Nucleophile role is filled by Glu336. Residue Glu337 participates in Zn(2+) binding. Residue Asn353 is glycosylated (N-linked (GlcNAc...) asparagine). Zn(2+) is bound at residue Asp364. Asn396 carries N-linked (GlcNAc...) asparagine glycosylation. His434 provides a ligand contact to Zn(2+).

Belongs to the peptidase M28 family. As to quaternary structure, homodimer. The monomeric form is inactive while the homodimer is active. In terms of processing, N-glycosylated. The secreted form is modified by hybrid or complex type oligosaccharide chains.

It is found in the endoplasmic reticulum. Its subcellular location is the golgi apparatus. The protein localises to the lysosome. It localises to the secreted. Carboxypeptidase that may play an important role in the hydrolysis of circulating peptides. Catalyzes the hydrolysis of dipeptides with unsubstituted terminals into amino acids. May play a role in the liberation of thyroxine hormone from its thyroglobulin (Tg) precursor. In Rattus norvegicus (Rat), this protein is Carboxypeptidase Q (Cpq).